Consider the following 994-residue polypeptide: Regulator of telomere elongation helicase 1 homolog (994 aa).

The Helicase ATP-binding domain maps to 15 to 300 (PKLSVKFPFE…EETARSEADA (286 aa)). 50 to 57 (SPTGTGKT) lines the ATP pocket. Positions 142, 160, 169, and 208 each coordinate [4Fe-4S] cluster. Positions 251–254 (DEAH) match the DEAH box motif. The segment at 876–895 (FKIETPGPSTSTLTQKSEPP) is disordered. The span at 882–892 (GPSTSTLTQKS) shows a compositional bias: polar residues.

The protein belongs to the helicase family. RAD3/XPD subfamily.

The protein resides in the nucleus. It carries out the reaction ATP + H2O = ADP + phosphate + H(+). A probable ATP-dependent DNA helicase implicated in DNA repair and the maintenance of genomic stability. Acts as an anti-recombinase to counteract toxic recombination and limit crossover during meiosis. Regulates meiotic recombination and crossover homeostasis by physically dissociating strand invasion events and thereby promotes noncrossover repair by meiotic synthesis dependent strand annealing (SDSA) as well as disassembly of D loop recombination intermediates. In Caenorhabditis elegans, this protein is Regulator of telomere elongation helicase 1 homolog.